The sequence spans 736 residues: Melanotransferrin (736 aa).

Residues 1–19 (MRCRSAAMWIFLALRTALG) form the signal peptide. Transferrin-like domains lie at 23–357 (VRWC…GLLC) and 366–706 (LRWC…GMQS). Cystine bridges form between C26–C63 and C36–C54. Fe(3+)-binding residues include D78 and Y107. The N-linked (GlcNAc...) asparagine glycan is linked to N118. Disulfide bonds link C130–C216, C172–C189, C186–C199, and C257–C271. T132 contributes to the hydrogencarbonate binding site. N135 carries N-linked (GlcNAc...) asparagine glycosylation. R136, V138, and G139 together coordinate hydrogencarbonate. Residue Y210 coordinates Fe(3+). 2 residues coordinate Fe(3+): H279 and Y451. N515 carries an N-linked (GlcNAc...) asparagine glycan. H625 serves as a coordination point for Fe(3+). G711 is lipidated: GPI-anchor amidated glycine. The propeptide at 712-736 (AAVGAPGASLLPLLPLAVGLLLSSL) is removed in mature form.

It belongs to the transferrin family.

The protein resides in the cell membrane. Functionally, involved in iron cellular uptake. Seems to be internalized and then recycled back to the cell membrane. Binds a single atom of iron per subunit. Could also bind zinc. This Oryctolagus cuniculus (Rabbit) protein is Melanotransferrin.